We begin with the raw amino-acid sequence, 372 residues long: Peroxisomal biogenesis factor 3 (372 aa).

At 1-15 (MLRSMWNFLKRHKKK) the chain is on the cytoplasmic side. Positions 1–45 (MLRSMWNFLKRHKKKCIFLGTVLGGVYILGKYGQKKIREIQEREA) are targeting to peroxisomes. Residues 16 to 36 (CIFLGTVLGGVYILGKYGQKK) traverse the membrane as a helical segment. The Peroxisomal segment spans residues 37–116 (IREIQEREAA…LKIISFTRSI (80 aa)). Residues 117–140 (VAVYSTCMLVVLLRVQLNIIGGYI) traverse the membrane as a helical segment. An interaction with PEX19 region spans residues 120–136 (YSTCMLVVLLRVQLNII). Over 141–372 (YLDNATVGKN…AFSTPQQLEK (232 aa)) the chain is Cytoplasmic.

Belongs to the peroxin-3 family. Interacts with PEX19. As to expression, identified in all tissues analyzed, with the strongest expression in liver and in testis.

It localises to the peroxisome membrane. Its function is as follows. Involved in peroxisome biosynthesis and integrity. Assembles membrane vesicles before the matrix proteins are translocated. As a docking factor for PEX19, is necessary for the import of peroxisomal membrane proteins in the peroxisomes. In Mus musculus (Mouse), this protein is Peroxisomal biogenesis factor 3 (Pex3).